We begin with the raw amino-acid sequence, 809 residues long: AP-3 complex subunit beta (809 aa).

5 HEAT repeats span residues 37–76 (YYSQ…DDDS), 112–151 (DPNL…SSLA), 153–186 (IILH…AGKN), 187–224 (DYHE…DHLE), and 524–561 (KICP…YDID). 4 positions are modified to phosphoserine: Ser-693, Ser-698, Ser-724, and Ser-726. Disordered stretches follow at residues 708 to 739 (FTSS…FTSQ) and 763 to 809 (PRKI…HLEL). The span at 722–739 (GDSNSISGKGNVNTFTSQ) shows a compositional bias: polar residues. Residues 772-791 (ESSDEDEDESEESSDDDEYS) show a composition bias toward acidic residues. The span at 792–809 (DSSLGTSSSGTSSSHLEL) shows a compositional bias: low complexity.

Belongs to the adaptor complexes large subunit family. As to quaternary structure, adaptor protein complex 3 (AP-3) is a heterotetramer composed of 2 large adaptins (APL5 and APL6), a medium adaptin (APM3) and a small adaptin (APS3). In terms of processing, pyrophosphorylated by 5-diphosphoinositol pentakisphosphate (5-IP7). Serine pyrophosphorylation is achieved by Mg(2+)-dependent, but enzyme independent transfer of a beta-phosphate from a inositol pyrophosphate to a pre-phosphorylated serine residue.

The protein localises to the golgi apparatus. Its subcellular location is the cytoplasmic vesicle. It is found in the clathrin-coated vesicle membrane. In terms of biological role, part of the AP-3 complex, an adaptor-related complex which is not clathrin-associated. The complex is associated with the Golgi region as well as more peripheral structures. It facilitates the budding of vesicles from the Golgi membrane and may be directly involved in trafficking to the vacuole. Required for the transport via the ALP pathway, which directs the transport of the cargo proteins PHO8 and VAM3 to the vacuole. The polypeptide is AP-3 complex subunit beta (APL6) (Saccharomyces cerevisiae (strain ATCC 204508 / S288c) (Baker's yeast)).